A 139-amino-acid polypeptide reads, in one-letter code: Small ribosomal subunit protein bS16 (139 aa).

The interval 84–139 (KGEPAPAPLLQPAEKAARPSFEAIGGEDEGKGEAITQKKKADKKDEAAAESSASEA) is disordered.

Belongs to the bacterial ribosomal protein bS16 family.

The sequence is that of Small ribosomal subunit protein bS16 from Streptomyces coelicolor (strain ATCC BAA-471 / A3(2) / M145).